Reading from the N-terminus, the 72-residue chain is Rubredoxin in uptake hydrogenase operon (72 aa).

The Rubredoxin-like domain maps to 19–70; that stretch reads DAVLECKICWHRYDPAVGDEVWQILAGTPFAALPAHWRCPQCDGDREQFMVV. Residues Cys-24, Cys-27, Cys-57, and Cys-60 each contribute to the Fe cation site.

Belongs to the rubredoxin family. Fe(3+) serves as cofactor.

Its function is as follows. Could be an electron transport intermediate in hydrogen oxidation. This Azotobacter chroococcum mcd 1 protein is Rubredoxin in uptake hydrogenase operon (hupR).